Here is a 193-residue protein sequence, read N- to C-terminus: Bcl-2-like protein 2 (193 aa).

Position 2 is an N-acetylalanine (Ala-2). The BH4 motif lies at 9–29 (DTRALVADFVGYKLRQKGYVC). The BH1 motif lies at 85-104 (ELFQGGPNWGRLVAFFVFGA). Positions 136 to 151 (DWIHSSGGWAEFTALY) match the BH2 motif. Residue Ala-177 is modified to Phosphoserine.

It belongs to the Bcl-2 family. Interacts with HIF3A (via C-terminus domain). Interacts with BOP. Expressed (at protein level) in a wide range of tissues with highest levels in brain, spinal cord, testis, pancreas, heart, spleen and mammary glands. Moderate levels found in thymus, ovary and small intestine. Not detected in salivary gland, muscle or liver. Also expressed in cell lines of myeloid, fibroblast and epithelial origin. Not detected in most lymphoid cell lines.

The protein resides in the mitochondrion membrane. In terms of biological role, promotes cell survival. Blocks dexamethasone-induced apoptosis. Mediates survival of postmitotic Sertoli cells by suppressing death-promoting activity of BAX. This Homo sapiens (Human) protein is Bcl-2-like protein 2 (BCL2L2).